Consider the following 533-residue polypeptide: Peptide chain release factor 3 (533 aa).

Residues 9 to 284 (ARRRTFAIIS…ALCELSPPPL (276 aa)) form the tr-type G domain. GTP-binding positions include 18 to 25 (SHPDAGKT), 95 to 99 (DTPGH), and 149 to 152 (NKLD).

It belongs to the TRAFAC class translation factor GTPase superfamily. Classic translation factor GTPase family. PrfC subfamily.

The protein resides in the cytoplasm. Functionally, increases the formation of ribosomal termination complexes and stimulates activities of RF-1 and RF-2. It binds guanine nucleotides and has strong preference for UGA stop codons. It may interact directly with the ribosome. The stimulation of RF-1 and RF-2 is significantly reduced by GTP and GDP, but not by GMP. This is Peptide chain release factor 3 from Cupriavidus necator (strain ATCC 17699 / DSM 428 / KCTC 22496 / NCIMB 10442 / H16 / Stanier 337) (Ralstonia eutropha).